We begin with the raw amino-acid sequence, 235 residues long: RING-H2 finger protein ATL17 (235 aa).

The helical transmembrane segment at 1 to 21 (MLTTTILILLIVILMVSLHLY) threads the bilayer. The RING-type; atypical zinc-finger motif lies at 76–118 (CSVCLSEFKDNESGRVMPNCKHTFHVHCIDMWFHSHSSCPLCR). Residues 143-167 (VYGDTNHHEGTETTGDSVPEDSQRK) are disordered.

It belongs to the RING-type zinc finger family. ATL subfamily.

Its subcellular location is the membrane. It carries out the reaction S-ubiquitinyl-[E2 ubiquitin-conjugating enzyme]-L-cysteine + [acceptor protein]-L-lysine = [E2 ubiquitin-conjugating enzyme]-L-cysteine + N(6)-ubiquitinyl-[acceptor protein]-L-lysine.. It functions in the pathway protein modification; protein ubiquitination. In terms of biological role, may be involved in the early steps of the plant defense signaling pathway. The protein is RING-H2 finger protein ATL17 (ATL17) of Arabidopsis thaliana (Mouse-ear cress).